The chain runs to 357 residues: cAMP-responsive element modulator (357 aa).

The interval 20-43 (ETVESQQDRSVTRSVAEHSSAHMQ) is disordered. Basic and acidic residues predominate over residues 25–39 (QQDRSVTRSVAEHSS). The region spanning 101-160 (TVQVATIAETDDSADSEVIDSHKRREILSRRPSYRKILNELSSDVPGIPKIEEEKSEEEG) is the KID domain. Serine 116, serine 142, serine 284, serine 287, and serine 290 each carry phosphoserine. One can recognise a bZIP domain in the interval 299–357 (TRKRELRLMKNREAAKECRRRKKEYVKCLESRVAVLEVQNKKLIEELETLKDICSPKTD). The tract at residues 300 to 325 (RKRELRLMKNREAAKECRRRKKEYVK) is basic motif. The leucine-zipper stretch occupies residues 327–348 (LESRVAVLEVQNKKLIEELETL).

It belongs to the bZIP family. In terms of assembly, binds DNA as a dimer. Interacts with CDC34. Interacts with FHL5. May interact with TSSK4. Isoform 1 forms a heterodimer with CREB3L4. Post-translationally, stimulated by phosphorylation. Phosphorylated on Ser-116 by TSSK4 in vitro. Ubiquitinated by CDC34 and RAD6B in order to be degraded by the proteasome. As to expression, expressed in the testis.

The protein localises to the nucleus. The protein resides in the cytoplasm. In terms of biological role, transcriptional regulator that binds the cAMP response element (CRE), a sequence present in many viral and cellular promoters. Isoforms are either transcriptional activators or repressors. Isoform 2, isoform 3 and isoform 4 are repressors, while isoform 1 is an activator. Plays a role in spermatogenesis and is involved in spermatid maturation. Binding of isoform 1 (activator) to CRE is increased by CREB3L4. The CREM isoform 1-CREB3L4 heterodimer functions through CRE and may recruit HIRA to CRE to regulate histone exchange. Plays a role in the regulation of the circadian clock: acts as a transcriptional repressor of the core circadian component PER1 by directly binding to cAMP response elements in its promoter. This Mus musculus (Mouse) protein is cAMP-responsive element modulator (Crem).